The following is a 236-amino-acid chain: Ureidoacrylate amidohydrolase RutB (236 aa).

The active-site Proton acceptor is aspartate 24. Lysine 133 is an active-site residue. The active-site Nucleophile is cysteine 166.

This sequence belongs to the isochorismatase family. RutB subfamily.

The catalysed reaction is (Z)-3-ureidoacrylate + H2O + H(+) = (Z)-3-aminoacrylate + NH4(+) + CO2. It catalyses the reaction (Z)-3-ureidoacrylate + H2O = (Z)-3-aminoacrylate + carbamate + H(+). The enzyme catalyses (Z)-2-methylureidoacrylate + H2O + H(+) = (Z)-2-methylaminoacrylate + NH4(+) + CO2. Its function is as follows. Hydrolyzes ureidoacrylate to form aminoacrylate and carbamate. The carbamate hydrolyzes spontaneously, thereby releasing one of the nitrogen atoms of the pyrimidine ring as ammonia and one of its carbon atoms as CO2. This Klebsiella pneumoniae subsp. pneumoniae (strain ATCC 700721 / MGH 78578) protein is Ureidoacrylate amidohydrolase RutB.